A 454-amino-acid polypeptide reads, in one-letter code: C4-dicarboxylate transport protein (454 aa).

Transmembrane regions (helical) follow at residues 33–53 (VQVL…PDIG), 66–86 (LVKM…IAGM), 101–121 (IYFL…ANLV), 148–168 (EQSI…GAFA), 170–190 (GDIL…AIVG), 210–230 (LVAI…AFTI), 243–263 (MLIG…LGAV), 354–374 (LLLV…AGFI), and 377–397 (AATL…ILGI).

It belongs to the dicarboxylate/amino acid:cation symporter (DAACS) (TC 2.A.23) family.

It localises to the cell inner membrane. Its function is as follows. Responsible for the transport of dicarboxylates such as succinate, fumarate, and malate from the periplasm across the membrane. This Sinorhizobium medicae (strain WSM419) (Ensifer medicae) protein is C4-dicarboxylate transport protein.